The chain runs to 250 residues: Triosephosphate isomerase (250 aa).

9-11 (NWK) serves as a coordination point for substrate. The active-site Electrophile is histidine 96. Glutamate 166 (proton acceptor) is an active-site residue. Substrate is bound by residues glycine 172, serine 212, and 233-234 (GG).

The protein belongs to the triosephosphate isomerase family. Homodimer.

The protein resides in the cytoplasm. It carries out the reaction D-glyceraldehyde 3-phosphate = dihydroxyacetone phosphate. It functions in the pathway carbohydrate biosynthesis; gluconeogenesis. It participates in carbohydrate degradation; glycolysis; D-glyceraldehyde 3-phosphate from glycerone phosphate: step 1/1. Functionally, involved in the gluconeogenesis. Catalyzes stereospecifically the conversion of dihydroxyacetone phosphate (DHAP) to D-glyceraldehyde-3-phosphate (G3P). This is Triosephosphate isomerase from Chlorobium phaeobacteroides (strain BS1).